The following is a 3305-amino-acid chain: Apolipophorins (3305 aa).

The N-terminal stretch at 1 to 23 (MGKSNRLLSVLFVISVLWKAAYG) is a signal peptide. Residues 39 to 640 (FAAGQKYNYG…SQTSFLPRSV (602 aa)) enclose the Vitellogenin domain. N-linked (GlcNAc...) asparagine glycosylation is found at asparagine 643 and asparagine 2769. The VWFD domain maps to 2733-2899 (LRAVVVNGQH…NSYRLSRSCP (167 aa)). A disulfide bond links cysteine 2757 and cysteine 2898.

Post-translationally, cleaved into 2 chains by furin protease. However, prevention of cleavage does not impair its function. In terms of processing, N-glycosylated.

Its subcellular location is the secreted. In terms of biological role, constitutes the major component of lipophorin, which mediates transport for various types of lipids in hemolymph. Acts by forming lipoprotein particles that bind lipoproteins and lipids. May be required for morphogens wingless (wg) and hedgehog (hh) function, possibly by acting as vehicles for the movement of wg and hh. The polypeptide is Apolipophorins (Manduca sexta (Tobacco hawkmoth)).